Consider the following 313-residue polypeptide: Ribonuclease HIII (313 aa).

The tract at residues 62–88 (AERWTADAETPAPKKPASKKSIPSVYQ) is disordered. One can recognise an RNase H type-2 domain in the interval 96 to 312 (MSVIGSDEVG…TQKAKRIASK (217 aa)). Residues Asp102, Glu103, and Asp207 each coordinate a divalent metal cation.

Belongs to the RNase HII family. RnhC subfamily. Requires Mn(2+) as cofactor. Mg(2+) is required as a cofactor.

Its subcellular location is the cytoplasm. It carries out the reaction Endonucleolytic cleavage to 5'-phosphomonoester.. Its function is as follows. Endonuclease that specifically degrades the RNA of RNA-DNA hybrids. The sequence is that of Ribonuclease HIII from Bacillus licheniformis (strain ATCC 14580 / DSM 13 / JCM 2505 / CCUG 7422 / NBRC 12200 / NCIMB 9375 / NCTC 10341 / NRRL NRS-1264 / Gibson 46).